A 163-amino-acid polypeptide reads, in one-letter code: Phosphopantetheine adenylyltransferase (163 aa).

Threonine 11 provides a ligand contact to substrate. Residues 11–12 (TF) and histidine 19 each bind ATP. Substrate is bound by residues lysine 43, leucine 75, and arginine 89. ATP contacts are provided by residues 90–92 (GLR), glutamate 100, and 125–131 (YMFISAT).

The protein belongs to the bacterial CoaD family. In terms of assembly, homohexamer. Mg(2+) serves as cofactor.

It is found in the cytoplasm. The enzyme catalyses (R)-4'-phosphopantetheine + ATP + H(+) = 3'-dephospho-CoA + diphosphate. Its pathway is cofactor biosynthesis; coenzyme A biosynthesis; CoA from (R)-pantothenate: step 4/5. In terms of biological role, reversibly transfers an adenylyl group from ATP to 4'-phosphopantetheine, yielding dephospho-CoA (dPCoA) and pyrophosphate. The polypeptide is Phosphopantetheine adenylyltransferase (Azoarcus sp. (strain BH72)).